The chain runs to 782 residues: Endonuclease MutS2 (782 aa).

Residue 336 to 343 coordinates ATP; the sequence is GPNTGGKT. The region spanning 707–782 is the Smr domain; the sequence is LDLRGYRYDE…GFGVTVVEIK (76 aa).

It belongs to the DNA mismatch repair MutS family. MutS2 subfamily. Homodimer. Binds to stalled ribosomes, contacting rRNA.

Endonuclease that is involved in the suppression of homologous recombination and thus may have a key role in the control of bacterial genetic diversity. Its function is as follows. Acts as a ribosome collision sensor, splitting the ribosome into its 2 subunits. Detects stalled/collided 70S ribosomes which it binds and splits by an ATP-hydrolysis driven conformational change. Acts upstream of the ribosome quality control system (RQC), a ribosome-associated complex that mediates the extraction of incompletely synthesized nascent chains from stalled ribosomes and their subsequent degradation. Probably generates substrates for RQC. This Staphylococcus saprophyticus subsp. saprophyticus (strain ATCC 15305 / DSM 20229 / NCIMB 8711 / NCTC 7292 / S-41) protein is Endonuclease MutS2.